Here is a 173-residue protein sequence, read N- to C-terminus: Alpha-crystallin A chain (173 aa).

An N-acetylmethionine modification is found at methionine 1. The 113-residue stretch at 52 to 164 (LFRSVLESGI…SDRPIPVARE (113 aa)) folds into the sHSP domain. Zn(2+)-binding residues include histidine 100, glutamate 102, histidine 107, and histidine 154. The tract at residues 152–173 (TIHSDRPIPVAREEKPTSAPSS) is disordered. The span at 153–167 (IHSDRPIPVAREEKP) shows a compositional bias: basic and acidic residues.

This sequence belongs to the small heat shock protein (HSP20) family. Heteropolymer composed of three CRYAA and one CRYAB subunits. Inter-subunit bridging via zinc ions enhances stability, which is crucial as there is no protein turn over in the lens. Can also form homodimers and homotetramers (dimers of dimers) which serve as the building blocks of homooligomers. Within homooligomers, the zinc-binding motif is created from residues of 3 different molecules. His-100 and Glu-102 from one molecule are ligands of the zinc ion, and His-107 and His-154 residues from additional molecules complete the site with tetrahedral coordination geometry.

Its subcellular location is the cytoplasm. The protein resides in the nucleus. Its function is as follows. Contributes to the transparency and refractive index of the lens. May act as a chaperone, preventing aggregation of various proteins under a wide range of stress conditions. This Alligator mississippiensis (American alligator) protein is Alpha-crystallin A chain (CRYAA).